We begin with the raw amino-acid sequence, 472 residues long: Adenosylhomocysteinase (472 aa).

Substrate is bound by residues Thr64, Asp138, and Glu198. 199–201 serves as a coordination point for NAD(+); that stretch reads TTT. 2 residues coordinate substrate: Lys228 and Asp232. Residues Asn233, 262-267, Glu285, Asn320, 341-343, and Asn386 contribute to the NAD(+) site; these read GFGDVG and IGH.

This sequence belongs to the adenosylhomocysteinase family. It depends on NAD(+) as a cofactor.

The protein resides in the cytoplasm. The enzyme catalyses S-adenosyl-L-homocysteine + H2O = L-homocysteine + adenosine. It participates in amino-acid biosynthesis; L-homocysteine biosynthesis; L-homocysteine from S-adenosyl-L-homocysteine: step 1/1. Its function is as follows. May play a key role in the regulation of the intracellular concentration of adenosylhomocysteine. The chain is Adenosylhomocysteinase from Prochlorococcus marinus (strain MIT 9215).